The following is a 106-amino-acid chain: Toxin-like structure LSTX-D7 (106 aa).

The first 20 residues, 1-20, serve as a signal peptide directing secretion; it reads MMKVLVVFALLVTLISYSSS. The propeptide occupies 21-41; the sequence is EGIDDLEADELLSLMANEQTR. Intrachain disulfides connect cysteine 45–cysteine 60, cysteine 52–cysteine 69, cysteine 59–cysteine 85, and cysteine 71–cysteine 83.

This sequence belongs to the neurotoxin 19 (CSTX) family. 02 (D7) subfamily. In terms of tissue distribution, expressed by the venom gland.

The protein localises to the secreted. In Lycosa singoriensis (Wolf spider), this protein is Toxin-like structure LSTX-D7.